Reading from the N-terminus, the 275-residue chain is Putative acyl-[acyl-carrier-protein] desaturase DesA2 (275 aa).

Fe cation-binding residues include E107, H110, E159, E189, and H192.

This sequence belongs to the fatty acid desaturase type 2 family. As to quaternary structure, homodimer. Fe(2+) serves as cofactor.

The protein operates within lipid metabolism; fatty acid metabolism. Its function is as follows. May be a desaturase involved in mycobacterial fatty acid biosynthesis. This chain is Putative acyl-[acyl-carrier-protein] desaturase DesA2 (desA2), found in Mycobacterium tuberculosis (strain CDC 1551 / Oshkosh).